A 361-amino-acid polypeptide reads, in one-letter code: tRNA/tmRNA (uracil-C(5))-methyltransferase (361 aa).

5 residues coordinate S-adenosyl-L-methionine: glutamine 185, tyrosine 213, asparagine 218, glutamate 234, and aspartate 294. Cysteine 319 (nucleophile) is an active-site residue. The active-site Proton acceptor is glutamate 353.

Belongs to the class I-like SAM-binding methyltransferase superfamily. RNA M5U methyltransferase family. TrmA subfamily.

The catalysed reaction is uridine(54) in tRNA + S-adenosyl-L-methionine = 5-methyluridine(54) in tRNA + S-adenosyl-L-homocysteine + H(+). It catalyses the reaction uridine(341) in tmRNA + S-adenosyl-L-methionine = 5-methyluridine(341) in tmRNA + S-adenosyl-L-homocysteine + H(+). Functionally, dual-specificity methyltransferase that catalyzes the formation of 5-methyluridine at position 54 (m5U54) in all tRNAs, and that of position 341 (m5U341) in tmRNA (transfer-mRNA). In Pseudomonas putida (strain W619), this protein is tRNA/tmRNA (uracil-C(5))-methyltransferase.